The following is a 331-amino-acid chain: Ribose-phosphate pyrophosphokinase (331 aa).

55–57 (DGE) serves as a coordination point for ATP. Histidine 148 and aspartate 187 together coordinate Mg(2+). Residue lysine 211 is part of the active site. Residues arginine 213, aspartate 237, and 241–245 (DTGGT) each bind D-ribose 5-phosphate.

The protein belongs to the ribose-phosphate pyrophosphokinase family. Class I subfamily. As to quaternary structure, homohexamer. Requires Mg(2+) as cofactor.

It localises to the cytoplasm. The enzyme catalyses D-ribose 5-phosphate + ATP = 5-phospho-alpha-D-ribose 1-diphosphate + AMP + H(+). Its pathway is metabolic intermediate biosynthesis; 5-phospho-alpha-D-ribose 1-diphosphate biosynthesis; 5-phospho-alpha-D-ribose 1-diphosphate from D-ribose 5-phosphate (route I): step 1/1. Functionally, involved in the biosynthesis of the central metabolite phospho-alpha-D-ribosyl-1-pyrophosphate (PRPP) via the transfer of pyrophosphoryl group from ATP to 1-hydroxyl of ribose-5-phosphate (Rib-5-P). This Prochlorococcus marinus subsp. pastoris (strain CCMP1986 / NIES-2087 / MED4) protein is Ribose-phosphate pyrophosphokinase.